Consider the following 420-residue polypeptide: Transcriptional adapter 2-beta (420 aa).

The ZZ-type zinc-finger motif lies at 4-59 (LSKKYCVYCLADVTSLRLRCTECQDIELCTDCFSAGAEIGNHRRWHGYQLVDGGRF). Positions 9, 12, 23, 26, 32, 35, 45, and 49 each coordinate Zn(2+). The SANT domain maps to 65 to 118 (EAEGGWTSREEQLLLDAIEQFGFGNWEDMAAHVGASRTPTEVMEHYVTMYIHGN). Positions 303-333 (EESAEYEAARHKREKRKENKNIANSKRGRED) are disordered.

It localises to the nucleus. Transcriptional coactivator. The chain is Transcriptional adapter 2-beta (tada2b) from Xenopus laevis (African clawed frog).